Reading from the N-terminus, the 479-residue chain is B-cell CLL/lymphoma 6 member B protein (479 aa).

Residues 38-105 (TDVTLLVGGQ…MYTSRLRLSP (68 aa)) form the BTB domain. 2 disordered regions span residues 143–190 (RPLE…PDPK) and 210–259 (GSLV…LSPT). Residues 147–160 (AEPPTPPTAPPPGS) are compositionally biased toward pro residues. The span at 162–172 (RRSEGHPDPPT) shows a compositional bias: basic and acidic residues. A compositionally biased stretch (low complexity) spans 234-244 (SSSSSSSSSSS). C2H2-type zinc fingers lie at residues 328–350 (YKCQLCRSSFRYKGNLASHRTVH), 356–378 (YHCSICGARFNRPANLKTHSRIH), 384–406 (YKCETCGSRFVQVAHLRAHVLIH), 412–434 (YPCPTCGTRFRHLQTLKSHVRIH), and 440–463 (YHCDPCGLHFRHKSQLRLHLRQKH).

Associates with BCL6 through the BTB domain. Ubiquitously expressed with higher expression found in heart and placenta.

It localises to the nucleus. Acts as a sequence-specific transcriptional repressor in association with BCL6. May function in a narrow stage or be related to some events in the early B-cell development. The chain is B-cell CLL/lymphoma 6 member B protein (BCL6B) from Homo sapiens (Human).